The chain runs to 109 residues: Cell division protein ZapA (109 aa).

Residues 21 to 99 (PEQLDALNQA…IEQALLEQGR (79 aa)) adopt a coiled-coil conformation.

It belongs to the ZapA family. Type 1 subfamily. In terms of assembly, homodimer. Interacts with FtsZ.

It localises to the cytoplasm. Functionally, activator of cell division through the inhibition of FtsZ GTPase activity, therefore promoting FtsZ assembly into bundles of protofilaments necessary for the formation of the division Z ring. It is recruited early at mid-cell but it is not essential for cell division. This is Cell division protein ZapA from Edwardsiella ictaluri (strain 93-146).